A 119-amino-acid chain; its full sequence is Beta-2-microglobulin (119 aa).

Positions 1-20 (MARSVVVALLVLLSLSGLEA) are cleaved as a signal peptide. The Ig-like C1-type domain occupies 25–114 (PKIQVYSRHP…VTFSTPKTVK (90 aa)). A disulfide bridge links cysteine 45 with cysteine 100.

It belongs to the beta-2-microglobulin family. Heterodimer of an alpha chain and a beta chain. Beta-2-microglobulin is the beta-chain of major histocompatibility complex class I molecules.

It localises to the secreted. Component of the class I major histocompatibility complex (MHC). Involved in the presentation of peptide antigens to the immune system. The sequence is that of Beta-2-microglobulin (B2M) from Ateles paniscus (Black spider monkey).